A 210-amino-acid chain; its full sequence is Large ribosomal subunit protein uL3 (210 aa).

This sequence belongs to the universal ribosomal protein uL3 family. As to quaternary structure, part of the 50S ribosomal subunit. Forms a cluster with proteins L14 and L19.

Its function is as follows. One of the primary rRNA binding proteins, it binds directly near the 3'-end of the 23S rRNA, where it nucleates assembly of the 50S subunit. This Caldicellulosiruptor bescii (strain ATCC BAA-1888 / DSM 6725 / KCTC 15123 / Z-1320) (Anaerocellum thermophilum) protein is Large ribosomal subunit protein uL3.